The following is a 189-amino-acid chain: GTP cyclohydrolase 1 (189 aa).

Zn(2+) is bound by residues C79, H82, and C150.

This sequence belongs to the GTP cyclohydrolase I family. In terms of assembly, homomer.

The catalysed reaction is GTP + H2O = 7,8-dihydroneopterin 3'-triphosphate + formate + H(+). It functions in the pathway cofactor biosynthesis; 7,8-dihydroneopterin triphosphate biosynthesis; 7,8-dihydroneopterin triphosphate from GTP: step 1/1. The polypeptide is GTP cyclohydrolase 1 (Rickettsia rickettsii (strain Iowa)).